The sequence spans 521 residues: Cytochrome P450 1A1 (521 aa).

Phe-229 contributes to the substrate binding site. A heme-binding site is contributed by Cys-463.

It belongs to the cytochrome P450 family. The cofactor is heme.

It is found in the endoplasmic reticulum membrane. Its subcellular location is the microsome membrane. It carries out the reaction an organic molecule + reduced [NADPH--hemoprotein reductase] + O2 = an alcohol + oxidized [NADPH--hemoprotein reductase] + H2O + H(+). In terms of biological role, cytochromes P450 are a group of heme-thiolate monooxygenases. They oxidize a variety of structurally unrelated compounds, including steroids, fatty acids, and xenobiotics. This is Cytochrome P450 1A1 (cyp1a1) from Sparus aurata (Gilthead sea bream).